Consider the following 184-residue polypeptide: Peptide deformylase (184 aa).

Residues C98 and H140 each coordinate Fe cation. E141 is a catalytic residue. Residue H144 participates in Fe cation binding.

It belongs to the polypeptide deformylase family. It depends on Fe(2+) as a cofactor.

The catalysed reaction is N-terminal N-formyl-L-methionyl-[peptide] + H2O = N-terminal L-methionyl-[peptide] + formate. In terms of biological role, removes the formyl group from the N-terminal Met of newly synthesized proteins. Requires at least a dipeptide for an efficient rate of reaction. N-terminal L-methionine is a prerequisite for activity but the enzyme has broad specificity at other positions. This chain is Peptide deformylase, found in Bacteroides thetaiotaomicron (strain ATCC 29148 / DSM 2079 / JCM 5827 / CCUG 10774 / NCTC 10582 / VPI-5482 / E50).